The primary structure comprises 208 residues: ATP synthase subunit beta, chloroplastic (208 aa).

It belongs to the ATPase alpha/beta chains family. F-type ATPases have 2 components, CF(1) - the catalytic core - and CF(0) - the membrane proton channel. CF(1) has five subunits: alpha(3), beta(3), gamma(1), delta(1), epsilon(1). CF(0) has four main subunits: a(1), b(1), b'(1) and c(9-12).

The protein resides in the plastid. It is found in the chloroplast thylakoid membrane. It carries out the reaction ATP + H2O + 4 H(+)(in) = ADP + phosphate + 5 H(+)(out). Its function is as follows. Produces ATP from ADP in the presence of a proton gradient across the membrane. The catalytic sites are hosted primarily by the beta subunits. The sequence is that of ATP synthase subunit beta, chloroplastic (atpB) from Lonchitis hirsuta (Tomato fern).